Reading from the N-terminus, the 766-residue chain is Discoidin domain-containing receptor A (766 aa).

The N-terminal stretch at 1–18 (MQIALVLLAIYGTTTTNT) is a signal peptide. Residues 19-372 (LRIDQCGENA…PPSSAATQQL (354 aa)) lie on the Extracellular side of the membrane. F5/8 type C domains lie at 24 to 180 (CGEN…IHGC) and 195 to 351 (SRLD…FTSA). The cysteines at positions 24 and 180 are disulfide-linked. N-linked (GlcNAc...) asparagine glycans are attached at residues asparagine 87, asparagine 103, asparagine 129, asparagine 242, asparagine 268, asparagine 311, and asparagine 353. The chain crosses the membrane as a helical span at residues 373–393 (LVVCGIIFLTIFACVAYCVSV). The Cytoplasmic portion of the chain corresponds to 394-766 (CLKRRQKNKS…FERLVKPFQD (373 aa)). Positions 475-501 (NFPPPPEGREEHTYSQPVSPENSSNGS) are disordered. The span at 488–501 (YSQPVSPENSSNGS) shows a compositional bias: polar residues. The region spanning 519–766 (LLIGKAIGEG…FERLVKPFQD (248 aa)) is the Protein kinase domain. ATP is bound by residues 525–533 (IGEGKFTMI) and lysine 547.

The protein belongs to the protein kinase superfamily. Tyr protein kinase family. Insulin receptor subfamily. Expressed in neurons in head and tail, some motoneurons in ventral nerve cord, in PVP interneurons, pharynx and stomato-intestinal muscle.

It localises to the cell membrane. The protein resides in the cell projection. Its subcellular location is the axon. The protein localises to the perikaryon. Functionally, receptor which, together with svh-4, is involved in axon guidance to establish the tracts for the ventral and dorsal nerve cords during nervous system development. May play a role in axon regeneration following injury in D-type motor neurons. This chain is Discoidin domain-containing receptor A, found in Caenorhabditis elegans.